A 147-amino-acid polypeptide reads, in one-letter code: Bis(5'-nucleosyl)-tetraphosphatase [asymmetrical] (147 aa).

The residue at position 2 (Ala2) is an N-acetylalanine. The 138-residue stretch at 2 to 139 (ALRACGLIIF…EMKATLQEGH (138 aa)) folds into the Nudix hydrolase domain. The Nudix box motif lies at 43–64 (GHVDPGENDLETALRETQEETG).

It belongs to the Nudix hydrolase family. A divalent metal cation is required as a cofactor.

The catalysed reaction is P(1),P(4)-bis(5'-guanosyl) tetraphosphate + H2O = GMP + GTP + 2 H(+). The enzyme catalyses a 5'-end CoA-ribonucleoside in mRNA + H2O = a 5'-end phospho-adenosine-phospho-ribonucleoside in mRNA + (R)-4'-phosphopantetheine + 2 H(+). It carries out the reaction a 5'-end FAD-phospho-ribonucleoside in mRNA + H2O = a 5'-end phospho-adenosine-phospho-ribonucleoside in mRNA + FMN + 2 H(+). Functionally, catalyzes the asymmetric hydrolysis of diadenosine 5',5'''-P1,P4-tetraphosphate (Ap4A) to yield AMP and ATP. Exhibits decapping activity towards FAD-capped RNAs and dpCoA-capped RNAs in vitro. The polypeptide is Bis(5'-nucleosyl)-tetraphosphatase [asymmetrical] (Nudt2) (Rattus norvegicus (Rat)).